We begin with the raw amino-acid sequence, 515 residues long: Bifunctional purine biosynthesis protein PurH (515 aa).

The 145-residue stretch at 1–145 (MTKRVLISVS…KNHASVTVVV (145 aa)) folds into the MGS-like domain.

Belongs to the PurH family.

It carries out the reaction (6R)-10-formyltetrahydrofolate + 5-amino-1-(5-phospho-beta-D-ribosyl)imidazole-4-carboxamide = 5-formamido-1-(5-phospho-D-ribosyl)imidazole-4-carboxamide + (6S)-5,6,7,8-tetrahydrofolate. The enzyme catalyses IMP + H2O = 5-formamido-1-(5-phospho-D-ribosyl)imidazole-4-carboxamide. Its pathway is purine metabolism; IMP biosynthesis via de novo pathway; 5-formamido-1-(5-phospho-D-ribosyl)imidazole-4-carboxamide from 5-amino-1-(5-phospho-D-ribosyl)imidazole-4-carboxamide (10-formyl THF route): step 1/1. It functions in the pathway purine metabolism; IMP biosynthesis via de novo pathway; IMP from 5-formamido-1-(5-phospho-D-ribosyl)imidazole-4-carboxamide: step 1/1. The polypeptide is Bifunctional purine biosynthesis protein PurH (Streptococcus pneumoniae (strain JJA)).